The chain runs to 82 residues: Antimicrobial peptide Smp43 (82 aa).

The signal sequence occupies residues 1–22 (MNRKLLLVTLMVTMLVMQPAEA). The propeptide occupies 66–82 (EAGQMPFDEFMDILYES).

The protein belongs to the non-disulfide-bridged peptide (NDBP) superfamily. Long chain multifunctional peptide (group 2) family. As to expression, expressed by the venom gland.

It localises to the secreted. The protein localises to the target cell membrane. Its function is as follows. Antimicrobial peptide with moderate activity against Gram-positive bacteria and Gram-negative bacteria, as well as low activity against fungi. Acts by inducing bacterial membrane disruption. Shows activity against B.subtilis (MIC=4 ug/ml), S.epidermidis (MIC=64 ug/ml), S.aureus (MIC=32 ug/ml), E.coli (MIC=128 ug/ml), K.pneumoniae (MIC=64 ug/ml), P.aeruginosa (MIC=64 ug/ml), and C.albicans (MIC=128 ug/ml). Does not show hemolysis activity. This is Antimicrobial peptide Smp43 from Scorpio palmatus (Israeli golden scorpion).